The sequence spans 847 residues: Beta-galactosidase 1 (847 aa).

Residues 1–32 (MGSKPNAMKNVVAMAAVSALFLLGFLVCSVSG) form the signal peptide. E190 serves as the catalytic Proton donor. The active-site Nucleophile is E259. The N-linked (GlcNAc...) asparagine glycan is linked to N469. The SUEL-type lectin domain maps to 761–847 (KPLHPKAHLQ…KKLAVEAVCA (87 aa)).

This sequence belongs to the glycosyl hydrolase 35 family. In terms of tissue distribution, ubiquitous, at low levels.

The protein localises to the secreted. The protein resides in the extracellular space. It is found in the apoplast. It catalyses the reaction Hydrolysis of terminal non-reducing beta-D-galactose residues in beta-D-galactosides.. The chain is Beta-galactosidase 1 (BGAL1) from Arabidopsis thaliana (Mouse-ear cress).